Here is a 265-residue protein sequence, read N- to C-terminus: H-2 class II histocompatibility antigen, A beta chain (265 aa).

The signal sequence occupies residues 1 to 27; it reads MALQIPSLLLSAAVVVLMVLSSPGTEG. A beta-1 region spans residues 28-122; it reads GDSERHFVYQ…PETHTSLRRL (95 aa). Residues 28 to 226 lie on the Extracellular side of the membrane; sequence GDSERHFVYQ…RAQSESAWSK (199 aa). Cystine bridges form between Cys-42/Cys-106 and Cys-145/Cys-201. Asn-46 carries an N-linked (GlcNAc...) asparagine glycan. The beta-2 stretch occupies residues 123-216; the sequence is EQPNVVISLS…SLKSPITVEW (94 aa). The Ig-like C1-type domain maps to 125-213; that stretch reads PNVVISLSRT…EHPSLKSPIT (89 aa). Positions 217–226 are connecting peptide; it reads RAQSESAWSK. Residues 227 to 247 form a helical membrane-spanning segment; it reads MLSGIGGCVLGVIFLGLGLFI. Over 248 to 265 the chain is Cytoplasmic; sequence RHRSQKGPRGPPPAGLLQ.

This sequence belongs to the MHC class II family. Post-translationally, ubiquitinated in immature dendritic cells leading to down-regulation of MHC class II.

The protein resides in the membrane. This chain is H-2 class II histocompatibility antigen, A beta chain (H2-Ab1), found in Mus musculus (Mouse).